A 131-amino-acid polypeptide reads, in one-letter code: Small ribosomal subunit protein uS8 (131 aa).

It belongs to the universal ribosomal protein uS8 family. Part of the 30S ribosomal subunit. Contacts proteins S5 and S12.

In terms of biological role, one of the primary rRNA binding proteins, it binds directly to 16S rRNA central domain where it helps coordinate assembly of the platform of the 30S subunit. This Shewanella amazonensis (strain ATCC BAA-1098 / SB2B) protein is Small ribosomal subunit protein uS8.